The sequence spans 72 residues: DNA gyrase inhibitor YacG (72 aa).

Cys7, Cys10, Cys26, and Cys30 together coordinate Zn(2+). The interval 44 to 72 is disordered; that stretch reads SIAGEEHTPSSDTARPQLSAEDLALLEQD.

Belongs to the DNA gyrase inhibitor YacG family. Interacts with GyrB. It depends on Zn(2+) as a cofactor.

In terms of biological role, inhibits all the catalytic activities of DNA gyrase by preventing its interaction with DNA. Acts by binding directly to the C-terminal domain of GyrB, which probably disrupts DNA binding by the gyrase. The polypeptide is DNA gyrase inhibitor YacG (Tolumonas auensis (strain DSM 9187 / NBRC 110442 / TA 4)).